The sequence spans 184 residues: Probable chemoreceptor glutamine deamidase CheD (184 aa).

This sequence belongs to the CheD family.

It carries out the reaction L-glutaminyl-[protein] + H2O = L-glutamyl-[protein] + NH4(+). Functionally, probably deamidates glutamine residues to glutamate on methyl-accepting chemotaxis receptors (MCPs), playing an important role in chemotaxis. This is Probable chemoreceptor glutamine deamidase CheD from Rhizobium etli (strain CIAT 652).